We begin with the raw amino-acid sequence, 579 residues long: Polyadenylate-binding protein, cytoplasmic and nuclear (579 aa).

Residues 1–10 (MADITEKTAE) show a composition bias toward basic and acidic residues. The segment at 1–32 (MADITEKTAEQLENLSLQDKQEGTNEENQSET) is disordered. RRM domains follow at residues 35-113 (ASLY…WSQR), 123-200 (GNIF…PHLS), 216-293 (TNVY…RAQK), and 319-396 (INLF…IAQR). Residues 487–566 (GFARNGPAAN…ASAAYESFKQ (80 aa)) form the PABC domain. Residues 560–579 (AYESFKQEQQQPQGEEAQQA) form a disordered region. The segment covering 566–579 (QEQQQPQGEEAQQA) has biased composition (low complexity).

Belongs to the polyadenylate-binding protein type-1 family.

The protein resides in the cytoplasm. Its subcellular location is the nucleus. In terms of biological role, binds the poly(A) tail of mRNA. Appears to be an important mediator of the multiple roles of the poly(A) tail in mRNA biogenesis, stability and translation. In the nucleus, involved in both mRNA cleavage and polyadenylation. Is also required for efficient mRNA export to the cytoplasm. Acts in concert with a poly(A)-specific nuclease (PAN) to affect poly(A) tail shortening, which may occur concomitantly with either nucleocytoplasmic mRNA transport or translational initiation. In the cytoplasm, stimulates translation initiation and regulates mRNA decay through translation termination-coupled poly(A) shortening, probably mediated by PAN. The protein is Polyadenylate-binding protein, cytoplasmic and nuclear (PAB1) of Candida glabrata (strain ATCC 2001 / BCRC 20586 / JCM 3761 / NBRC 0622 / NRRL Y-65 / CBS 138) (Yeast).